The following is a 374-amino-acid chain: L-serine/homoserine O-acetyltransferase (374 aa).

An AB hydrolase-1 domain is found at 46 to 357 (AVLVLTGLSP…TPAGHDAFLV (312 aa)). Ser149 (nucleophile) is an active-site residue. Residues Asp319 and His352 contribute to the active site.

This sequence belongs to the AB hydrolase superfamily. MetX family. Homodimer.

The protein localises to the cytoplasm. The enzyme catalyses L-serine + acetyl-CoA = O-acetyl-L-serine + CoA. It carries out the reaction L-homoserine + acetyl-CoA = O-acetyl-L-homoserine + CoA. Its pathway is antibiotic biosynthesis. Involved in the biosynthesis of the antibiotic D-cycloserine (DCS), a cyclic structural analog of D-alanine, used as an antitubercular agent. Catalyzes the transfer of the acetyl group from acetyl-CoA to the hydroxyl group of L-serine to yield the activated serine, O-acetyl-L-serine. It prefers L-serine over L-homoserine. In Streptomyces lavendulae, this protein is L-serine/homoserine O-acetyltransferase.